The following is a 903-amino-acid chain: Immunoglobulin superfamily member 22 (903 aa).

4 consecutive Ig-like domains span residues P67–T158, E232–T322, P418–T508, and P606–S696. Fibronectin type-III domains lie at F703 to P798 and L804 to P898.

The protein is Immunoglobulin superfamily member 22 (IGSF22) of Homo sapiens (Human).